We begin with the raw amino-acid sequence, 4555 residues long: Protocadherin Fat 3 (4555 aa).

Residues 1–31 (MGVTMRHCIDTRPPSCLIFLLLKLCATVSQG) form the signal peptide. The Extracellular portion of the chain corresponds to 32 to 4153 (LPGTGPLGFH…AGHSYVGKEE (4122 aa)). Cadherin domains lie at 43-157 (THAL…RPLF), 158-265 (SPTT…APII), 263-374 (PIIH…TPIK), 376-471 (EKDV…TPEF), 472-577 (QETL…SPLF), 578-680 (EKVA…SKSF), 726-830 (KSFP…SPVF), 831-935 (LQDS…SPAF), 936-1042 (IPSS…TPYF), 1043-1147 (PDFA…APLT), 1148-1253 (SEPI…KPQF), 1254-1358 (PEKV…SPIP), 1362-1459 (DEPF…GPEF), 1460-1565 (SQPH…SPYF), 1566-1768 (TNPL…PPVF), 1769-1882 (LFSQ…PPVF), 1883-1985 (TQAV…TQSF), 1982-2083 (TQSF…SPVF), 2084-2185 (VGLP…MPVF), 2186-2286 (DKPF…PPVF), 2287-2393 (DQPT…PPVF), 2394-2495 (NQLI…SPAF), 2496-2599 (SQST…APQF), 2600-2707 (MTLE…LPSF), 2708-2813 (TQSQ…KPVF), 2814-2923 (ETSS…APVF), 2924-3028 (AHEV…SPVC), 3029-3130 (DQVA…PPVF), 3131-3235 (SSNH…PPVF), 3236-3340 (ERRD…PPRF), 3341-3445 (SQDV…SPVF), 3446-3550 (TPAN…KPTA), and 3551-3652 (IPLE…TIRF). The N-linked (GlcNAc...) asparagine glycan is linked to Asn48. Asn341 carries N-linked (GlcNAc...) asparagine glycosylation. N-linked (GlcNAc...) asparagine glycans are attached at residues Asn481, Asn562, Asn667, Asn799, Asn879, Asn898, and Asn1006. 2 N-linked (GlcNAc...) asparagine glycosylation sites follow: Asn1367 and Asn1429. An N-linked (GlcNAc...) asparagine glycan is attached at Asn1751. Residues Asn1944, Asn1993, and Asn1996 are each glycosylated (N-linked (GlcNAc...) asparagine). 4 N-linked (GlcNAc...) asparagine glycosylation sites follow: Asn2208, Asn2292, Asn2331, and Asn2467. The N-linked (GlcNAc...) asparagine glycan is linked to Asn2734. An N-linked (GlcNAc...) asparagine glycan is attached at Asn3000. A glycan (N-linked (GlcNAc...) asparagine) is linked at Asn3201. N-linked (GlcNAc...) asparagine glycosylation is found at Asn3449, Asn3618, and Asn3741. Residues 3794-3832 (SNDPCVEKPCPEDMQCVGYEASRRPFLCQCPPGKLGECS) enclose the EGF-like 1 domain. Disulfide bonds link Cys3798–Cys3809, Cys3803–Cys3821, and Cys3823–Cys3831. In terms of domain architecture, Laminin G-like spans 3834–4017 (HTSLSFAGNS…VGLTELKLGC (184 aa)). The N-linked (GlcNAc...) asparagine glycan is linked to Asn3926. 10 disulfides stabilise this stretch: Cys3984–Cys4017, Cys4024–Cys4035, Cys4029–Cys4045, Cys4047–Cys4056, Cys4063–Cys4074, Cys4068–Cys4083, Cys4085–Cys4094, Cys4101–Cys4112, Cys4106–Cys4121, and Cys4123–Cys4132. 2 EGF-like domains span residues 4020–4057 (YPDACQRSPCLHGGSCSGLPSGGYQCSCLSQFTGTNCE) and 4059–4095 (EITACFPNPCRNGGSCDPIGNTFICSCKAGLTGVTCE). An EGF-like 4; calcium-binding domain is found at 4097-4133 (DVDECEREECENGGSCVNLFGSFFCNCTPGYVGQYCG). Residues 4154-4174 (LIGIAVVLFVIFTLIVLFIVF) form a helical membrane-spanning segment. Residues 4175 to 4555 (RKKVFRKNYS…FVETQHQTQV (381 aa)) are Cytoplasmic-facing. Polar residues predominate over residues 4326–4343 (SNKGSNSEVQSLNSFQSD). 3 disordered regions span residues 4326–4347 (SNKGSNSEVQSLNSFQSDSGDD), 4395–4424 (GGYDIDSEYPPPHEEEFLSQDQLPPPLPED), and 4452–4472 (PRFHPSQYLPPHPLPGETDLG). Omega-N-methylarginine occurs at positions 4508 and 4518.

In terms of tissue distribution, restricted to the nervous system. Abundantly expressed in the fetal brain.

Its subcellular location is the membrane. Functionally, may play a role in the interactions between neurites derived from specific subsets of neurons during development. The polypeptide is Protocadherin Fat 3 (Fat3) (Rattus norvegicus (Rat)).